We begin with the raw amino-acid sequence, 192 residues long: Adenylate kinase (192 aa).

Position 10–18 (10–18 (GVPGVGKTT)) interacts with ATP.

It belongs to the archaeal adenylate kinase family.

It is found in the cytoplasm. It catalyses the reaction AMP + ATP = 2 ADP. The protein is Adenylate kinase of Methanoculleus marisnigri (strain ATCC 35101 / DSM 1498 / JR1).